The primary structure comprises 559 residues: Glutamine--tRNA ligase (559 aa).

Residues 44–54 carry the 'HIGH' region motif; that stretch reads PEPNGYLHIGH. ATP contacts are provided by residues 45–47 and 51–57; these read EPN and HIGHAKS. L-glutamine-binding residues include Asp77 and Tyr222. ATP contacts are provided by residues Thr241 and 272-273; that span reads RL. The short motif at 279-283 is the 'KMSKS' region element; the sequence is LTSKR.

The protein belongs to the class-I aminoacyl-tRNA synthetase family. As to quaternary structure, monomer.

The protein localises to the cytoplasm. The catalysed reaction is tRNA(Gln) + L-glutamine + ATP = L-glutaminyl-tRNA(Gln) + AMP + diphosphate. This Pasteurella multocida (strain Pm70) protein is Glutamine--tRNA ligase.